The primary structure comprises 277 residues: MPNIPTISLNDGRPFAEPGLGTYNLRGDEGVAAMVAAIDSGYRLLDTAVNYENESEVGRAVRASSVDRDELIVASKIPGRQHGRAEAVDSIRGSLDRLGLDVIDLQLIHWPNPSVGRWLDTWRGMIDAREAGLVRSIGVSNFTEPMLKTLIDETGVTPAVNQVELHPYFPQAALRAFHDEHGIRTESWSPLARRSELLTEQLLQELAVVYGVTPTQVVLRWHVQLGSTPIPKSADPDRQRENADVFGFALTADQVDAISGLERGRLWDGDPDTHEEM.

The active-site Proton donor is the tyrosine 51. Substrate is bound at residue histidine 109. Residue 189-242 (SPLARRSELLTEQLLQELAVVYGVTPTQVVLRWHVQLGSTPIPKSADPDRQREN) participates in NADP(+) binding.

This sequence belongs to the aldo/keto reductase family.

The protein resides in the cytoplasm. It catalyses the reaction 2-dehydro-D-gluconate + NADP(+) = 2,5-didehydro-D-gluconate + NADPH + H(+). Functionally, catalyzes the reduction of 2,5-diketo-D-gluconic acid (25DKG) to 2-keto-L-gulonic acid (2KLG). 25DKGR-B has higher catalytic efficiency than 25DKGR-A. This chain is 2,5-diketo-D-gluconic acid reductase B (dkgB), found in Corynebacterium sp. (strain SHS752001).